The chain runs to 84 residues: Sulfur carrier protein TusA (84 aa).

Cys-21 serves as the catalytic Cysteine persulfide intermediate.

The protein belongs to the sulfur carrier protein TusA family.

The protein resides in the cytoplasm. Sulfur carrier protein which probably makes part of a sulfur-relay system. This Pseudomonas syringae pv. tomato (strain ATCC BAA-871 / DC3000) protein is Sulfur carrier protein TusA.